Reading from the N-terminus, the 301-residue chain is 33 kDa chaperonin (301 aa).

2 cysteine pairs are disulfide-bonded: Cys-239–Cys-241 and Cys-272–Cys-275.

The protein belongs to the HSP33 family. Post-translationally, under oxidizing conditions two disulfide bonds are formed involving the reactive cysteines. Under reducing conditions zinc is bound to the reactive cysteines and the protein is inactive.

Its subcellular location is the cytoplasm. Redox regulated molecular chaperone. Protects both thermally unfolding and oxidatively damaged proteins from irreversible aggregation. Plays an important role in the bacterial defense system toward oxidative stress. The protein is 33 kDa chaperonin of Nostoc sp. (strain PCC 7120 / SAG 25.82 / UTEX 2576).